We begin with the raw amino-acid sequence, 263 residues long: Small ribosomal subunit protein eS4 (263 aa).

Residues 42 to 104 (LPLIIFLRNR…TGEHFRLVYD (63 aa)) form the S4 RNA-binding domain.

It belongs to the eukaryotic ribosomal protein eS4 family. As to quaternary structure, component of the small ribosomal subunit.

The protein localises to the cytoplasm. Functionally, component of the small ribosomal subunit. The ribosome is a large ribonucleoprotein complex responsible for the synthesis of proteins in the cell. This is Small ribosomal subunit protein eS4 (rps4) from Xenopus laevis (African clawed frog).